A 300-amino-acid chain; its full sequence is F-box/LRR-repeat protein 15 (300 aa).

Position 1 is an N-acetylmethionine (Met1). The 48-residue stretch at 19-66 (LLDLPWEDVLLPHVLNWVPLRQLLRLQRVSRAFRALVQLHLARLRRFD) folds into the F-box domain. The interval 113–269 (NPQLRSVALA…EPSLSRLRKR (157 aa)) is interaction with SMURF1. 5 LRR repeats span residues 141–162 (RLQR…RGLA), 167–188 (ALEE…VYLA), 194–215 (GLRS…QELA), 220–241 (QLEH…RTLA), and 246–267 (ALRS…SRLR).

The protein belongs to the FBXL15 family. As to quaternary structure, part of the SCF (SKP1-CUL1-F-box) E3 ubiquitin-protein ligase complex SCF(FBXL15) composed of CUL1, SKP1, RBX1 and FBXL15. As to expression, expressed in heart, liver, spleen, bone, muscle, brain and kidney (at protein level).

The protein resides in the cytoplasm. It participates in protein modification; protein ubiquitination. Substrate recognition component of a SCF (SKP1-CUL1-F-box protein) E3 ubiquitin-protein ligase complex which mediates the ubiquitination and subsequent proteasomal degradation of SMURF1, thereby acting as a positive regulator of the BMP signaling pathway. Required for dorsal/ventral pattern formation and bone mass maintenance. Also mediates ubiquitination of SMURF2 and WWP2. This chain is F-box/LRR-repeat protein 15 (Fbxl15), found in Mus musculus (Mouse).